The sequence spans 172 residues: Signal peptidase complex catalytic subunit SEC11 (172 aa).

Topologically, residues 1–14 (MLSSLGNPRQAAAQ) are cytoplasmic. A helical; Signal-anchor for type II membrane protein transmembrane segment spans residues 15–35 (LMNFALILSTAFMMWKGLSVI). Topologically, residues 36–172 (TDSPSPIVVV…MGLLVVLQRE (137 aa)) are lumenal. Residues S49 and H90 each act as charge relay system in the active site. N-linked (GlcNAc...) asparagine glycosylation is present at N111. Catalysis depends on D115, which acts as the Charge relay system. The segment at 158–169 (VMLGIMGLLVVL) is C-terminal short (CTS) helix.

It belongs to the peptidase S26B family. Component of the signal peptidase complex (SPC) composed of a catalytic subunit SEC11 and three accessory subunits SPC1, SPC2 and SPC3. The complex induces a local thinning of the ER membrane which is used to measure the length of the signal peptide (SP) h-region of protein substrates. This ensures the selectivity of the complex towards h-regions shorter than 18-20 amino acids. SPC associates with the translocon complex.

It is found in the endoplasmic reticulum membrane. It catalyses the reaction Cleavage of hydrophobic, N-terminal signal or leader sequences from secreted and periplasmic proteins.. In terms of biological role, catalytic component of the signal peptidase complex (SPC) which catalyzes the cleavage of N-terminal signal sequences from nascent proteins as they are translocated into the lumen of the endoplasmic reticulum. Specifically cleaves N-terminal signal peptides that contain a hydrophobic alpha-helix (h-region) shorter than 18-20 amino acids. This is Signal peptidase complex catalytic subunit SEC11 (SEC11) from Fusarium vanettenii (strain ATCC MYA-4622 / CBS 123669 / FGSC 9596 / NRRL 45880 / 77-13-4) (Fusarium solani subsp. pisi).